Here is a 210-residue protein sequence, read N- to C-terminus: Thymidylate kinase (210 aa).

Residue 10-17 (GPDGAGKT) participates in ATP binding.

It belongs to the thymidylate kinase family.

It catalyses the reaction dTMP + ATP = dTDP + ADP. Functionally, phosphorylation of dTMP to form dTDP in both de novo and salvage pathways of dTTP synthesis. In Geobacillus sp. (strain WCH70), this protein is Thymidylate kinase.